The sequence spans 216 residues: Probable GTP-binding protein EngB (216 aa).

The EngB-type G domain occupies 37 to 214 (DGLEVAFAGR…RAAMIRLLDE (178 aa)). Residues 45–52 (GRSNVGKS), 72–76 (GRTQE), 92–95 (DMPG), 159–162 (TKAD), and 193–195 (TSS) each bind GTP. Ser-52 and Thr-74 together coordinate Mg(2+).

This sequence belongs to the TRAFAC class TrmE-Era-EngA-EngB-Septin-like GTPase superfamily. EngB GTPase family. Requires Mg(2+) as cofactor.

In terms of biological role, necessary for normal cell division and for the maintenance of normal septation. This is Probable GTP-binding protein EngB from Rhodopseudomonas palustris (strain HaA2).